We begin with the raw amino-acid sequence, 238 residues long: Octanoyltransferase (238 aa).

The BPL/LPL catalytic domain maps to 40 to 220; sequence AGGSDALLLL…RVCDALDGRL (181 aa). Residues 78 to 85, 150 to 152, and 163 to 165 contribute to the substrate site; these read RGGKITWH, AIG, and GFA. Cys-181 acts as the Acyl-thioester intermediate in catalysis.

The protein belongs to the LipB family.

Its subcellular location is the cytoplasm. It catalyses the reaction octanoyl-[ACP] + L-lysyl-[protein] = N(6)-octanoyl-L-lysyl-[protein] + holo-[ACP] + H(+). The protein operates within protein modification; protein lipoylation via endogenous pathway; protein N(6)-(lipoyl)lysine from octanoyl-[acyl-carrier-protein]: step 1/2. In terms of biological role, catalyzes the transfer of endogenously produced octanoic acid from octanoyl-acyl-carrier-protein onto the lipoyl domains of lipoate-dependent enzymes. Lipoyl-ACP can also act as a substrate although octanoyl-ACP is likely to be the physiological substrate. The sequence is that of Octanoyltransferase from Mycobacterium sp. (strain JLS).